A 235-amino-acid chain; its full sequence is Large ribosomal subunit protein uL1 (235 aa).

This sequence belongs to the universal ribosomal protein uL1 family. Part of the 50S ribosomal subunit.

Binds directly to 23S rRNA. The L1 stalk is quite mobile in the ribosome, and is involved in E site tRNA release. Functionally, protein L1 is also a translational repressor protein, it controls the translation of the L11 operon by binding to its mRNA. The chain is Large ribosomal subunit protein uL1 from Micrococcus luteus (strain ATCC 4698 / DSM 20030 / JCM 1464 / CCM 169 / CCUG 5858 / IAM 1056 / NBRC 3333 / NCIMB 9278 / NCTC 2665 / VKM Ac-2230) (Micrococcus lysodeikticus).